The chain runs to 326 residues: Ig gamma-1 chain C region (326 aa).

The tract at residues 1–97 (AETTAPSVYP…ASSTKVDKKI (97 aa)) is CH1. Cys27 and Cys82 are joined by a disulfide. A hinge region spans residues 98–112 (VPRNCGGDCKPCICT). The interval 113–219 (GSEVSSVFIF…PIEKTISKPE (107 aa)) is CH2. Intrachain disulfides connect Cys140/Cys200 and Cys246/Cys304. N-linked (GlcNAc...) asparagine glycosylation is present at Asn176. The segment at 220 to 326 (GRTQVPHVYT…EKSLSHSPGK (107 aa)) is CH3.

The protein is Ig gamma-1 chain C region of Rattus norvegicus (Rat).